Here is a 252-residue protein sequence, read N- to C-terminus: Large ribosomal subunit protein uL30 (252 aa).

It belongs to the universal ribosomal protein uL30 family.

Its function is as follows. Binds to G-rich structures in 28S rRNA and in mRNAs. Plays a regulatory role in the translation apparatus; inhibits cell-free translation of mRNAs. This chain is Large ribosomal subunit protein uL30 (RpL7), found in Drosophila melanogaster (Fruit fly).